The chain runs to 1899 residues: Protein TIC 214 (1899 aa).

6 helical membrane passes run 23 to 43 (VVVGLYYGFLTTFSIGPSYLF), 64 to 84 (FITGQLMMFISIYYVPLHLAL), 87 to 107 (PHTITVLVLPYLLFHFFWNNH), 124 to 144 (LSIQCLFLNNLIVQFLNLFIL), 172 to 192 (VGWLIGHILFMKLVGLVLVCI), and 217 to 237 (WTARIFSTLLFITCMYYLGVH). Disordered stretches follow at residues 256 to 280 (EQKKSKEETDEEIEKTFETKETKKE) and 1581 to 1619 (PKDYLELDNGTPKEKEKQGKVKGNLGSNQKTRENLGLDL). The span at 269–280 (EKTFETKETKKE) shows a compositional bias: basic and acidic residues.

This sequence belongs to the TIC214 family. As to quaternary structure, part of the Tic complex.

It localises to the plastid. It is found in the chloroplast inner membrane. Its function is as follows. Involved in protein precursor import into chloroplasts. May be part of an intermediate translocation complex acting as a protein-conducting channel at the inner envelope. The protein is Protein TIC 214 of Ceratophyllum demersum (Rigid hornwort).